The following is a 77-amino-acid chain: uncharacterized protein (77 aa).

This is an uncharacterized protein from Vaccinia virus (strain Copenhagen) (VACV).